We begin with the raw amino-acid sequence, 158 residues long: NAD(P)H-quinone oxidoreductase subunit J, chloroplastic (158 aa).

The protein belongs to the complex I 30 kDa subunit family. As to quaternary structure, NDH is composed of at least 16 different subunits, 5 of which are encoded in the nucleus.

The protein resides in the plastid. Its subcellular location is the chloroplast thylakoid membrane. The catalysed reaction is a plastoquinone + NADH + (n+1) H(+)(in) = a plastoquinol + NAD(+) + n H(+)(out). It catalyses the reaction a plastoquinone + NADPH + (n+1) H(+)(in) = a plastoquinol + NADP(+) + n H(+)(out). Its function is as follows. NDH shuttles electrons from NAD(P)H:plastoquinone, via FMN and iron-sulfur (Fe-S) centers, to quinones in the photosynthetic chain and possibly in a chloroplast respiratory chain. The immediate electron acceptor for the enzyme in this species is believed to be plastoquinone. Couples the redox reaction to proton translocation, and thus conserves the redox energy in a proton gradient. The protein is NAD(P)H-quinone oxidoreductase subunit J, chloroplastic of Ranunculus macranthus (Large buttercup).